The primary structure comprises 340 residues: Immunoglobulin-binding protein 1 (340 aa).

A UIM domain is found at Leu-47–Asp-61. Positions Arg-99–Ala-203 are interaction with PPP2CA. 2 disordered regions span residues Asp-223–Lys-242 and Ser-291–Gly-340. The interaction with MID1 stretch occupies residues Arg-226–Ser-291. Lys-242 is subject to N6-acetyllysine. Low complexity predominate over residues Ala-292–Gln-301. Positions Glu-302–Glu-312 are enriched in acidic residues. Residues Glu-313–Pro-330 show a composition bias toward basic and acidic residues.

It belongs to the IGBP1/TAP42 family. In terms of assembly, interacts with PPP2CB, and with PP4 and PP6. Interacts with MID2. Interacts with ubiquitin. Interacts with partially folded PPP2CA, but not with the fully active protein. Interacts with MID1. Phosphorylated. In terms of processing, monoubiquitination by MID1 triggers calpain-mediated cleavage and switches IGBP1 activity from protective to destructive. Expressed in spleen, thymus, liver and brain. Ubiquitously expressed in B lineage cell lines.

The protein resides in the cytoplasm. Its function is as follows. Associated to surface IgM-receptor; may be involved in signal transduction. Involved in regulation of the catalytic activity of the phosphatases PP2A, PP4 and PP6 by protecting their partially folded catalytic subunits from degradative polyubiquitination until they associate with regulatory subunits. The chain is Immunoglobulin-binding protein 1 (Igbp1) from Mus musculus (Mouse).